Reading from the N-terminus, the 371-residue chain is Macronuclear solute carrier homolog CR-MSC (371 aa).

Solcar repeat units follow at residues 16–111, 120–208, and 215–304; these read RMNY…FYDK, ARPD…CKEN, and PHWI…LSQF. 6 helical membrane passes run 22 to 42, 89 to 109, 126 to 146, 184 to 204, 221 to 241, and 281 to 301; these read FAAANVIALITHAATQPLDMV, TFFFRTVGYTTARVTAFGYFY, VAAGVLGGFIAGVVTNPIDIV, AGANGFKLAAICSSMTNIYDW, LWGTAVAVAIGTVVSMPFDMI, and FGSFYAGGEAYFLRLFLICYL.

This sequence belongs to the mitochondrial carrier (TC 2.A.29) family.

Its subcellular location is the membrane. The chain is Macronuclear solute carrier homolog CR-MSC from Oxytricha trifallax (Sterkiella histriomuscorum).